Consider the following 134-residue polypeptide: Small ribosomal subunit protein bS16 (134 aa).

A disordered region spans residues 105–134 (QNERREKRLAIKTRRRQAKKAAEAEGQESA). A compositionally biased stretch (basic residues) spans 114 to 123 (AIKTRRRQAK).

Belongs to the bacterial ribosomal protein bS16 family.

This Chlorobium phaeobacteroides (strain BS1) protein is Small ribosomal subunit protein bS16.